The sequence spans 552 residues: Harmonin (552 aa).

The interval 1–86 (MDRKVAREFR…LTPRRSRKLK (86 aa)) is N-terminal domain. PDZ domains lie at 87 to 169 (EVRL…HIGL) and 211 to 293 (KVFI…AAAG). The tract at residues 194–552 (GVRGSLGSPG…KEYDDELTFF (359 aa)) is mediates interaction with MYO7B. Ser219 is modified (phosphoserine). The stretch at 310–377 (RELQRQELLM…EKFKKQWEED (68 aa)) forms a coiled coil. Positions 401–427 (KPKYDQGVEPELEPADDLDGGTEEQGE) are disordered. Residues 408-427 (VEPELEPADDLDGGTEEQGE) are compositionally biased toward acidic residues. Residues 452-537 (DVRLLRIKKE…QGGDWIDLVV (86 aa)) form the PDZ 3 domain.

In terms of assembly, part of the IMAC/intermicrovillar adhesion complex/intermicrovillar tip-link complex composed of ANKS4B, MYO7B, USH1C, CDHR2 and CDHR5. Part of a complex composed of USH1C, USH1G and MYO7A. Interacts with F-actin. Interacts with USH2A. Interacts with SLC4A7. Interacts (via PDZ1 domain) with the C-terminus of USHBP1. Interacts (via N-terminus and PDZ 2 domain) with CDH23. Interacts with USH1G. Interacts with MYO7B. Interacts with CDHR2 and CDHR5; may mediate their interaction with MYO7B at the microvilli tip. Interacts (via PDZ 1 domain) with ANKS4B. Interacts (via PDZ 1 domain) with DOCK4. In terms of tissue distribution, expressed in small intestine, colon, kidney, eye and weakly in pancreas. Expressed also in vestibule of the inner ear.

It localises to the cytoplasm. It is found in the cytosol. Its subcellular location is the cytoskeleton. The protein localises to the cell projection. The protein resides in the microvillus. Anchoring/scaffolding protein that is a part of the functional network formed by USH1C, USH1G, CDH23 and MYO7A that mediates mechanotransduction in cochlear hair cells. Required for normal development and maintenance of cochlear hair cell bundles. As part of the intermicrovillar adhesion complex/IMAC plays a role in brush border differentiation, controlling microvilli organization and length. Probably plays a central regulatory role in the assembly of the complex, recruiting CDHR2, CDHR5 and MYO7B to the microvilli tips. This Homo sapiens (Human) protein is Harmonin (USH1C).